The primary structure comprises 301 residues: D-alanine--D-alanine ligase A (301 aa).

Residues 96-290 (KKILRYEGVE…YSKLLDMIIE (195 aa)) enclose the ATP-grasp domain. 123-178 (LDKLGFPLVVKPNSGGSSVGVKIVYNKNELISMLETVFEWDSEVVIEKYIKGDEIT) contributes to the ATP binding site. Asp245, Glu257, and Asn259 together coordinate Mg(2+).

This sequence belongs to the D-alanine--D-alanine ligase family. Mg(2+) serves as cofactor. Mn(2+) is required as a cofactor.

It localises to the cytoplasm. It catalyses the reaction 2 D-alanine + ATP = D-alanyl-D-alanine + ADP + phosphate + H(+). Its pathway is cell wall biogenesis; peptidoglycan biosynthesis. Its function is as follows. Cell wall formation. The protein is D-alanine--D-alanine ligase A of Bacillus cereus (strain ATCC 14579 / DSM 31 / CCUG 7414 / JCM 2152 / NBRC 15305 / NCIMB 9373 / NCTC 2599 / NRRL B-3711).